The primary structure comprises 174 residues: uncharacterized protein (174 aa).

It belongs to the NAD(P)H dehydrogenase (quinone) family.

This is an uncharacterized protein from Bacillus subtilis (strain 168).